The following is a 379-amino-acid chain: Glutamate 5-kinase (379 aa).

Position 15 (K15) interacts with ATP. Substrate is bound by residues S56, D143, and N155. 175–176 (SD) serves as a coordination point for ATP. One can recognise a PUA domain in the interval 281–358 (RGTLAIDAGA…SDAAQLLGVR (78 aa)).

The protein belongs to the glutamate 5-kinase family.

It localises to the cytoplasm. It catalyses the reaction L-glutamate + ATP = L-glutamyl 5-phosphate + ADP. It functions in the pathway amino-acid biosynthesis; L-proline biosynthesis; L-glutamate 5-semialdehyde from L-glutamate: step 1/2. Its function is as follows. Catalyzes the transfer of a phosphate group to glutamate to form L-glutamate 5-phosphate. The chain is Glutamate 5-kinase from Nitrobacter winogradskyi (strain ATCC 25391 / DSM 10237 / CIP 104748 / NCIMB 11846 / Nb-255).